A 348-amino-acid chain; its full sequence is MTAPSQVLKIRRPDDWHLHLRDGDMLKTVVPYTSEIYGRAIVMPNLAPPVTTVEAAVAYRQRILDAVPAGHDFTPLMTCYLTDSLDPNELERGFNEGVFTAAKLYPANATTNSSHGVTSVDAIMPILERMEKIGMPLLVHGEVTHADIDIFDREARFIESVMEPLRQRLTALKVVFEHITTKDAADYVRDGNERLAATITPQHLMFNRNHMLVGGVRPHLYCLPILKRNIHQQALRELVASGFNRVFLGTDSAPHARHRKESSCGCAGCFNAPTALGSYATVFEEMNALQHFEAFCSVNGPQFYGLPVNDTFIELVREEQQVAESIALTDDTLVPFLAGETVRWSVKQ.

Residues His17 and His19 each contribute to the Zn(2+) site. Substrate is bound by residues 19–21 (HLR) and Asn45. Zn(2+)-binding residues include Lys103, His140, and His178. N6-carboxylysine is present on Lys103. Position 140 (His140) interacts with substrate. Substrate is bound at residue Leu223. Asp251 is a binding site for Zn(2+). Asp251 is an active-site residue. Residues His255 and Ala267 each coordinate substrate.

The protein belongs to the metallo-dependent hydrolases superfamily. DHOase family. Class II DHOase subfamily. In terms of assembly, homodimer. Zn(2+) serves as cofactor.

It carries out the reaction (S)-dihydroorotate + H2O = N-carbamoyl-L-aspartate + H(+). It functions in the pathway pyrimidine metabolism; UMP biosynthesis via de novo pathway; (S)-dihydroorotate from bicarbonate: step 3/3. Functionally, catalyzes the reversible cyclization of carbamoyl aspartate to dihydroorotate. The protein is Dihydroorotase of Escherichia coli O6:K15:H31 (strain 536 / UPEC).